A 390-amino-acid chain; its full sequence is Methionyl-tRNA formyltransferase, mitochondrial (390 aa).

A mitochondrion-targeting transit peptide spans 1 to 33 (MRVLLRCCCGHLPVGGGAGRRSNPRWRALARLS).

Belongs to the Fmt family.

It localises to the mitochondrion. It carries out the reaction L-methionyl-tRNA(fMet) + (6R)-10-formyltetrahydrofolate = N-formyl-L-methionyl-tRNA(fMet) + (6S)-5,6,7,8-tetrahydrofolate + H(+). Methionyl-tRNA formyltransferase that formylates methionyl-tRNA in mitochondria and is crucial for translation initiation. The sequence is that of Methionyl-tRNA formyltransferase, mitochondrial (MTFMT) from Bos taurus (Bovine).